Consider the following 434-residue polypeptide: Flagellum-specific ATP synthase (434 aa).

An ATP-binding site is contributed by 164 to 171; that stretch reads AGSGVGKS.

Belongs to the ATPase alpha/beta chains family.

It is found in the cytoplasm. It catalyses the reaction ATP + H2O + 4 H(+)(in) = ADP + phosphate + 5 H(+)(out). Functionally, probable catalytic subunit of a protein translocase for flagellum-specific export, or a proton translocase involved in local circuits at the flagellum. The polypeptide is Flagellum-specific ATP synthase (fliI) (Helicobacter pylori (strain J99 / ATCC 700824) (Campylobacter pylori J99)).